A 352-amino-acid chain; its full sequence is MNIENLIKGINGLDNKVMSKIQKRLDNLTKPLGSLGTLEDIVKQLGGITGEVYPSVKNKTVIIMCADNGIVEENVSSCPKSVTASVTRNFMKGFTGINVFTRHAGADIEVIDIGVDADINEEGIINKKIRRGTSNMIKGAAMTRDEALKGLEVGIEAVKELKDKGVNLIGTGEMGVGNTTTSSAVASVLTGCPVDEMVGIGSGLTKEAFRNKIQIVKEAIALNKPNKEDPIDVLSKVGGFDIAGLAGCFLGAAIYRIPIVIDGFISASAALLAVKINPLVKNFIIPSHGSAEPGSKWIMKELDLEPMLNLKMRLGEGTGAALAFQIVDMAVFSYLEMGTFENAEIEPYKPLK.

The active-site Proton acceptor is the Glu316.

It belongs to the CobT family.

The enzyme catalyses 5,6-dimethylbenzimidazole + nicotinate beta-D-ribonucleotide = alpha-ribazole 5'-phosphate + nicotinate + H(+). It functions in the pathway nucleoside biosynthesis; alpha-ribazole biosynthesis; alpha-ribazole from 5,6-dimethylbenzimidazole: step 1/2. Catalyzes the synthesis of alpha-ribazole-5'-phosphate from nicotinate mononucleotide (NAMN) and 5,6-dimethylbenzimidazole (DMB). The chain is Nicotinate-nucleotide--dimethylbenzimidazole phosphoribosyltransferase from Clostridium acetobutylicum (strain ATCC 824 / DSM 792 / JCM 1419 / IAM 19013 / LMG 5710 / NBRC 13948 / NRRL B-527 / VKM B-1787 / 2291 / W).